The chain runs to 274 residues: MAIHLYKTSTPSTRNGAVDSQVKSNPRNNLIYGQHRCGKGRNARGIITAGHRGGGHKRLYRKIDFRRNEKDIYGRIVTIEYDPNRNAYICLIHYGDGEKRYILHPRGAIIGDTIVSGTEVPIKMGNALPLTDMPLGTAIHNIEITLGKGGQLARAAGAVAKLIAKEGKSATLKLPSGEVRLISKNCSATVGQVGNVGANQKSLGRAGSKCWLGKRPVVRGVVMNPVDHPHGGGEGRAPIGRKRPATPWGYPALGRRSRKRNKYSDNLILRRRTK.

Disordered regions lie at residues 1–25 (MAIH…VKSN) and 223–274 (MNPV…RRTK).

Belongs to the universal ribosomal protein uL2 family. Part of the 50S ribosomal subunit.

Its subcellular location is the plastid. The protein localises to the chloroplast. This is Large ribosomal subunit protein uL2cz/uL2cy (rpl2-A) from Citrus sinensis (Sweet orange).